The following is a 500-amino-acid chain: Inner membrane transporter YjeM (500 aa).

The Cytoplasmic segment spans residues 1-10; sequence MTHTIKKMSL. Residues 11–31 traverse the membrane as a helical segment; that stretch reads IGLILMIFTSVFGFANSPSAF. Topologically, residues 32–37 are periplasmic; that stretch reads YLMGYS. The chain crosses the membrane as a helical span at residues 38–58; sequence AIPWYIFSALLFFIPFALMMA. The Cytoplasmic segment spans residues 59-83; that stretch reads EMGSAYRKEEGGIYSWMNNSVGPRY. A helical membrane pass occupies residues 84–104; sequence AFIGTFMWFSSYVIWMVSTAA. At 105-124 the chain is on the periplasmic side; the sequence is KIWVPFSTFVFGADMTQHWR. Residues 125-145 traverse the membrane as a helical segment; the sequence is IAGLEPTQVVGLLAVGWMILV. The Cytoplasmic portion of the chain corresponds to 146–163; that stretch reads TCVAARGINKIARITAVG. Residues 164 to 184 traverse the membrane as a helical segment; it reads GIAVMCLNLVLLLVSVAILLL. Residues 185 to 209 lie on the Periplasmic side of the membrane; it reads NGGHFAQEINFTSSPNPGYHSGLAM. The chain crosses the membrane as a helical span at residues 210–230; the sequence is LSFVVFAIFAYGGIEAVGGLV. At 231–243 the chain is on the cytoplasmic side; that stretch reads DKTEKPEKNFAKG. A helical membrane pass occupies residues 244-264; that stretch reads IVFAAIVISIGYSLAIFLWGV. At 265–308 the chain is on the periplasmic side; sequence STNWQQILSNSAVNLGNITYILMSSLGTTLGNALNLSPEAAMTV. A helical transmembrane segment spans residues 309 to 329; it reads GVWFARITGLSMFLAYTGAFF. The Cytoplasmic portion of the chain corresponds to 330–361; sequence TLSYSPLKAIIQGTPKALWPAPMTTLNANGMP. A helical transmembrane segment spans residues 362–382; the sequence is ATAMWLQCVLVSLFILLVSFG. The Periplasmic segment spans residues 383-394; sequence GDTASAFYNKLT. The chain crosses the membrane as a helical span at residues 395 to 415; it reads LMANVSMTLPYLFLALAFPFF. At 416 to 433 the chain is on the cytoplasmic side; sequence KARQDLERPFVLFKTKAS. A helical membrane pass occupies residues 434–454; that stretch reads TLVATGVVVLVVTFANVFTII. The Periplasmic segment spans residues 455-462; it reads QPVIEAGD. Residues 463–483 traverse the membrane as a helical segment; the sequence is WDSALWMIGGPIFFSLLAMAI. Over 484–500 the chain is Cytoplasmic; sequence YQNYSSRMSADPEWAAE.

The protein belongs to the amino acid-polyamine-organocation (APC) superfamily.

The protein resides in the cell inner membrane. The chain is Inner membrane transporter YjeM (yjeM) from Salmonella typhi.